The primary structure comprises 72 residues: Phaiodotoxin-3 (72 aa).

Residues 1 to 72 (KFIRHKDESF…CFGALESKCA (72 aa)) enclose the LCN-type CS-alpha/beta domain. 4 cysteine pairs are disulfide-bonded: Cys13–Cys38, Cys23–Cys50, Cys27–Cys52, and Cys63–Cys71.

It belongs to the long (4 C-C) scorpion toxin superfamily. Sodium channel inhibitor family. In terms of tissue distribution, expressed by the venom gland.

The protein localises to the secreted. Its function is as follows. Sodium channel (Nav) specific neurotoxin. The polypeptide is Phaiodotoxin-3 (Anuroctonus phaiodactylus (Mafia scorpion)).